A 298-amino-acid chain; its full sequence is Ribosomal RNA small subunit methyltransferase A (298 aa).

Residues asparagine 35, leucine 37, glycine 62, glutamate 83, aspartate 108, and asparagine 133 each contribute to the S-adenosyl-L-methionine site.

It belongs to the class I-like SAM-binding methyltransferase superfamily. rRNA adenine N(6)-methyltransferase family. RsmA subfamily.

Its subcellular location is the cytoplasm. It catalyses the reaction adenosine(1518)/adenosine(1519) in 16S rRNA + 4 S-adenosyl-L-methionine = N(6)-dimethyladenosine(1518)/N(6)-dimethyladenosine(1519) in 16S rRNA + 4 S-adenosyl-L-homocysteine + 4 H(+). Functionally, specifically dimethylates two adjacent adenosines (A1518 and A1519) in the loop of a conserved hairpin near the 3'-end of 16S rRNA in the 30S particle. May play a critical role in biogenesis of 30S subunits. In Streptococcus pyogenes serotype M2 (strain MGAS10270), this protein is Ribosomal RNA small subunit methyltransferase A.